Reading from the N-terminus, the 309-residue chain is Glutaminase (309 aa).

Substrate-binding residues include Ser-64, Asn-114, Glu-160, Asn-167, Tyr-191, Tyr-243, and Val-261.

The protein belongs to the glutaminase family. Homotetramer.

It catalyses the reaction L-glutamine + H2O = L-glutamate + NH4(+). In Rhizobium etli (strain CIAT 652), this protein is Glutaminase.